The chain runs to 363 residues: UDP-3-O-acylglucosamine N-acyltransferase (363 aa).

The Proton acceptor role is filled by His-259.

Belongs to the transferase hexapeptide repeat family. LpxD subfamily. In terms of assembly, homotrimer.

It catalyses the reaction a UDP-3-O-[(3R)-3-hydroxyacyl]-alpha-D-glucosamine + a (3R)-hydroxyacyl-[ACP] = a UDP-2-N,3-O-bis[(3R)-3-hydroxyacyl]-alpha-D-glucosamine + holo-[ACP] + H(+). It functions in the pathway bacterial outer membrane biogenesis; LPS lipid A biosynthesis. Catalyzes the N-acylation of UDP-3-O-acylglucosamine using 3-hydroxyacyl-ACP as the acyl donor. Is involved in the biosynthesis of lipid A, a phosphorylated glycolipid that anchors the lipopolysaccharide to the outer membrane of the cell. The chain is UDP-3-O-acylglucosamine N-acyltransferase from Ruegeria pomeroyi (strain ATCC 700808 / DSM 15171 / DSS-3) (Silicibacter pomeroyi).